The primary structure comprises 203 residues: MVKVKICGLRRKEDIEYANELKPDYVGFVFAKSKRQIEVEQALDLISLLDKEIKTVGVFVNEPVENALKIAQTLNLDVLQFHGDETQDYIDNFKNFTVWKAIRIKDKEDLEKTKEFKVNSFVFDTLTKNEYGGTGKTFNWEVLKGFELNVPIILAGGLNENNVEEAIRIVNPYAVDVSSGVETEGYKDFKKMKSFIEKVRGIR.

It belongs to the TrpF family.

The enzyme catalyses N-(5-phospho-beta-D-ribosyl)anthranilate = 1-(2-carboxyphenylamino)-1-deoxy-D-ribulose 5-phosphate. It participates in amino-acid biosynthesis; L-tryptophan biosynthesis; L-tryptophan from chorismate: step 3/5. This Thermoanaerobacter sp. (strain X514) protein is N-(5'-phosphoribosyl)anthranilate isomerase.